Reading from the N-terminus, the 861-residue chain is Leucine--tRNA ligase (861 aa).

The 'HIGH' region motif lies at 42 to 52; that stretch reads PYPSGKLHMGH. The short motif at 620–624 is the 'KMSKS' region element; sequence KMSKS. Position 623 (Lys623) interacts with ATP.

The protein belongs to the class-I aminoacyl-tRNA synthetase family.

The protein localises to the cytoplasm. It catalyses the reaction tRNA(Leu) + L-leucine + ATP = L-leucyl-tRNA(Leu) + AMP + diphosphate. The sequence is that of Leucine--tRNA ligase from Buchnera aphidicola subsp. Schizaphis graminum (strain Sg).